The primary structure comprises 99 residues: Putative transmembrane protein ORF13 (99 aa).

Helical transmembrane passes span I8 to I28, L42 to V62, and G73 to A93.

It is found in the host membrane. In His1 virus (isolate Australia/Victoria) (His1V), this protein is Putative transmembrane protein ORF13.